Reading from the N-terminus, the 230-residue chain is uncharacterized protein (230 aa).

Positions 1–21 (MARYDARLRGIGKAHACSAFA) are cleaved as a signal peptide. Residues 47-190 (SASVQENFIA…TVQTSSSGDP (144 aa)) form a disordered region. Over residues 141 to 150 (PQSQTSANSQ) the composition is skewed to polar residues. Positions 151-165 (KKPEIRCRERSKNAR) are enriched in basic and acidic residues. Polar residues predominate over residues 173–188 (AVATNEAETVQTSSSG).

It to R.meliloti RA0936 and y4aO.

This is an uncharacterized protein from Sinorhizobium fredii (strain NBRC 101917 / NGR234).